The following is a 261-amino-acid chain: tRNA threonylcarbamoyladenosine dehydratase (261 aa).

The helical transmembrane segment at cysteine 230–serine 250 threads the bilayer.

Belongs to the HesA/MoeB/ThiF family.

It is found in the membrane. Catalyzes the ATP-dependent dehydration of threonylcarbamoyladenosine at position 37 (t(6)A37) to form cyclic t(6)A37 (ct(6)A37) in tRNAs that read codons beginning with adenine. The polypeptide is tRNA threonylcarbamoyladenosine dehydratase (tcdA) (Haemophilus influenzae (strain ATCC 51907 / DSM 11121 / KW20 / Rd)).